Consider the following 733-residue polypeptide: Polyribonucleotide nucleotidyltransferase (733 aa).

Positions 404–424 (NYNMPPYSTGETGRVGSPKRR) are disordered. Asp516 and Asp522 together coordinate Mg(2+). The KH domain maps to 582 to 641 (PRIITVHIPVDKIGEVIGPKGKMINQIQDDTGANISIEDDGTIFIGADNGDSAESARSMI). An S1 motif domain is found at 653–725 (GERYLGTVVK…DRGKLSLVLA (73 aa)).

Belongs to the polyribonucleotide nucleotidyltransferase family. Requires Mg(2+) as cofactor.

The protein localises to the cytoplasm. It carries out the reaction RNA(n+1) + phosphate = RNA(n) + a ribonucleoside 5'-diphosphate. In terms of biological role, involved in mRNA degradation. Catalyzes the phosphorolysis of single-stranded polyribonucleotides processively in the 3'- to 5'-direction. This chain is Polyribonucleotide nucleotidyltransferase, found in Cutibacterium acnes (strain DSM 16379 / KPA171202) (Propionibacterium acnes).